Consider the following 576-residue polypeptide: Kinetochore-associated protein DSN1 (576 aa).

Residues 1-11 show a composition bias toward polar residues; that stretch reads MSLEPTQTVSG. 4 disordered regions span residues 1-22, 35-64, 185-205, and 227-246; these read MSLEPTQTVSGTPPMLHQRTHK, LESDSKATLQSNEPTQKDEEETEYFENKQS, YSQPTAAGGPDMTTPQNISSS, and QPHYIQRTRERKKSIGSQRG. Residues 235 to 246 are compositionally biased toward basic residues; that stretch reads RERKKSIGSQRG. Ser-250 is modified (phosphoserine). The disordered stretch occupies residues 412–437; it reads RSRRKFSERRKALPKEPKKLLPNSKN. Residues 420–430 show a composition bias toward basic and acidic residues; it reads RRKALPKEPKK.

In terms of assembly, component of the MIND kinetochore complex, which is composed of at least MTW1, NNF1, NSL1 and DSN1. Interacts with NSL1.

The protein localises to the nucleus. Its subcellular location is the chromosome. It localises to the centromere. It is found in the kinetochore. Its function is as follows. Acts as an essential component of the kinetochore MIND complex, which is required for the spindle checkpoint and kinetochore integrity. MIND plays a role in establishing a bipolar spindle-kinetochore interaction by joining kinetochore subunits contacting DNA to those contacting microtubules. This chain is Kinetochore-associated protein DSN1 (DSN1), found in Saccharomyces cerevisiae (strain ATCC 204508 / S288c) (Baker's yeast).